Consider the following 1238-residue polypeptide: Receptor-type tyrosine-protein phosphatase eta (1238 aa).

The first 28 residues, 1–28 (MKPAARETRTPPRSPGLRWALLPLLLLL), serve as a signal peptide directing secretion. Residues 29 to 876 (RQGQVLCAGA…LPQDPGVICG (848 aa)) lie on the Extracellular side of the membrane. Residues 39–122 (APNPIFDIEA…LNKTITTEPW (84 aa)) form the Fibronectin type-III 1 domain. Asparagine 62, asparagine 78, asparagine 85, asparagine 90, asparagine 110, asparagine 114, asparagine 145, asparagine 164, asparagine 173, asparagine 182, asparagine 198, asparagine 207, asparagine 244, asparagine 253, asparagine 267, asparagine 278, asparagine 313, asparagine 317, asparagine 333, asparagine 366, asparagine 379, asparagine 398, asparagine 403, asparagine 437, asparagine 452, asparagine 488, asparagine 506, asparagine 538, asparagine 572, asparagine 576, asparagine 662, asparagine 668, asparagine 685, asparagine 691, asparagine 725, asparagine 811, and asparagine 838 each carry an N-linked (GlcNAc...) asparagine glycan. Residues 170 to 266 (PGTNNSFAFP…GQPRNKVFKT (97 aa)) enclose the Fibronectin type-III 2 domain. Fibronectin type-III domains lie at 270-358 (QVSD…SPDQ), 359-443 (VSDF…TDPS), 444-527 (AVTD…TQYT), 528-621 (RPSS…TEPE), 622-718 (PVTS…TDPP), and 717-803 (PPTP…SEVL). A helical membrane pass occupies residues 877-897 (AVFGCIFGALAITAVGGFIFW). Residues 898–1238 (RKKRTDAKNN…MFGKTNGYIA (341 aa)) are Cytoplasmic-facing. Phosphoserine is present on serine 910. The 258-residue stretch at 942–1199 (FAEEYEDLKL…VFLNQCVLDI (258 aa)) folds into the Tyrosine-protein phosphatase domain. Residues aspartate 1106, 1140–1146 (CSAGVGR), and glutamine 1184 contribute to the substrate site. The active-site Phosphocysteine intermediate is cysteine 1140.

This sequence belongs to the protein-tyrosine phosphatase family. Receptor class 3 subfamily. Monomer. Interacts with CTNNB1 (phosphorylated) and JUP (phosphorylated). Interacts with FLT3 (phosphorylated). Interacts with GAB1 and GRB2. In terms of tissue distribution, expressed at high levels in brain, kidney, spleen and intestine, and at lower levels in liver, lung, thymus and heart. Expressed at a high level in the myeloid cell line FDC-P2, and at a lower level in the pre-B lymphoid cell line WEHI-231 and the T hybridoma cell line HB21.7.31. Not expressed in the fibroblast cell line NIH3T3 or the erythroid cell line F5-5. Expressed in macrophages.

Its subcellular location is the cell membrane. The protein resides in the cell projection. It localises to the ruffle membrane. The protein localises to the cell junction. The catalysed reaction is O-phospho-L-tyrosyl-[protein] + H2O = L-tyrosyl-[protein] + phosphate. Its function is as follows. Tyrosine phosphatase which dephosphorylates or contributes to the dephosphorylation of CTNND1, FLT3, PDGFRB, MET, KDR, LYN, SRC, MAPK1, MAPK3, EGFR, TJP1, OCLN, PIK3R1 and PIK3R2. Plays a role in cell adhesion, migration, proliferation and differentiation. Has a role in megakaryocytes and platelet formation. Involved in vascular development. May be involved in the mechanism of contact inhibition of cell growth. Regulator of macrophage adhesion and spreading. Positively affects cell-matrix adhesion. Positive regulator of platelet activation and thrombosis. Negative regulator of cell proliferation. Negative regulator of PDGF-stimulated cell migration; through dephosphorylation of PDGFR. Positive regulator of endothelial cell survival, as well as of VEGF-induced SRC and AKT activation; through KDR dephosphorylation. Negative regulator of EGFR signaling pathway; through EGFR dephosphorylation. Enhances the barrier function of epithelial junctions during reassembly. Negatively regulates T-cell receptor (TCR) signaling. Upon T-cell TCR activation, it is up-regulated and excluded from the immunological synapses, while upon T-cell-antigen presenting cells (APC) disengagement, it is no longer excluded and can dephosphorylate PLCG1 and LAT to down-regulate prolongation of signaling. This chain is Receptor-type tyrosine-protein phosphatase eta (Ptprj), found in Mus musculus (Mouse).